Here is a 94-residue protein sequence, read N- to C-terminus: Co-chaperonin GroES (94 aa).

Belongs to the GroES chaperonin family. Heptamer of 7 subunits arranged in a ring. Interacts with the chaperonin GroEL.

The protein localises to the cytoplasm. Together with the chaperonin GroEL, plays an essential role in assisting protein folding. The GroEL-GroES system forms a nano-cage that allows encapsulation of the non-native substrate proteins and provides a physical environment optimized to promote and accelerate protein folding. GroES binds to the apical surface of the GroEL ring, thereby capping the opening of the GroEL channel. This chain is Co-chaperonin GroES, found in Heliobacterium modesticaldum (strain ATCC 51547 / Ice1).